Consider the following 123-residue polypeptide: Large ribosomal subunit protein bL12 (123 aa).

Belongs to the bacterial ribosomal protein bL12 family. Homodimer. Part of the ribosomal stalk of the 50S ribosomal subunit. Forms a multimeric L10(L12)X complex, where L10 forms an elongated spine to which 2 to 4 L12 dimers bind in a sequential fashion. Binds GTP-bound translation factors.

In terms of biological role, forms part of the ribosomal stalk which helps the ribosome interact with GTP-bound translation factors. Is thus essential for accurate translation. This Dechloromonas aromatica (strain RCB) protein is Large ribosomal subunit protein bL12.